We begin with the raw amino-acid sequence, 455 residues long: Glutamate-1-semialdehyde 2,1-aminomutase (455 aa).

Lys286 bears the N6-(pyridoxal phosphate)lysine mark.

The protein belongs to the class-III pyridoxal-phosphate-dependent aminotransferase family. HemL subfamily. Homodimer. The cofactor is pyridoxal 5'-phosphate.

It localises to the cytoplasm. It catalyses the reaction (S)-4-amino-5-oxopentanoate = 5-aminolevulinate. Its pathway is porphyrin-containing compound metabolism; protoporphyrin-IX biosynthesis; 5-aminolevulinate from L-glutamyl-tRNA(Glu): step 2/2. The protein is Glutamate-1-semialdehyde 2,1-aminomutase of Clavibacter michiganensis subsp. michiganensis (strain NCPPB 382).